The primary structure comprises 318 residues: Large ribosomal subunit protein uL10 (318 aa).

At tyrosine 24 the chain carries Phosphotyrosine. Threonine 59 bears the Phosphothreonine mark. Lysine 264 participates in a covalent cross-link: Glycyl lysine isopeptide (Lys-Gly) (interchain with G-Cter in ubiquitin). A Glycyl lysine isopeptide (Lys-Gly) (interchain with G-Cter in SUMO1); alternate cross-link involves residue lysine 298. Lysine 298 participates in a covalent cross-link: Glycyl lysine isopeptide (Lys-Gly) (interchain with G-Cter in SUMO2); alternate. The tract at residues 298 to 318 is disordered; sequence KVEAKEESEESDEDMGFGLFD. Residues 303 to 312 show a composition bias toward acidic residues; sequence EESEESDEDM. A phosphoserine mark is found at serine 305 and serine 308.

It belongs to the universal ribosomal protein uL10 family. In terms of assembly, P0 forms a pentameric complex by interaction with dimers of P1 and P2. Identified in a IGF2BP1-dependent mRNP granule complex containing untranslated mRNAs. Interacts with APEX1. Interacts with FMR1 isoform 6. In terms of processing, ubiquitinated at Lys-264 by RNF14 and RNF25 in response to ribosome collisions (ribosome stalling).

The protein resides in the nucleus. It localises to the cytoplasm. In terms of biological role, ribosomal protein P0 is the functional equivalent of E.coli protein L10. The chain is Large ribosomal subunit protein uL10 (RPLP0) from Oryctolagus cuniculus (Rabbit).